Here is a 1189-residue protein sequence, read N- to C-terminus: Tyrosine-protein phosphatase non-receptor type 14 (1189 aa).

The region spanning 21 to 306 (FVTRIRLLDS…TRHKFYKQNK (286 aa)) is the FERM domain. Residues S314, S461, S486, S591, S593, S594, and S646 each carry the phosphoserine modification. The tract at residues 744–775 (ARIPNRPPPEYPGPRKSVSNGALRQDQGTPLP) is disordered. Residues 760–771 (SVSNGALRQDQG) show a composition bias toward polar residues. Residue S833 is modified to Phosphoserine. Positions 911–1182 (VFTEYEQIPN…KFVYQVLVQF (272 aa)) constitute a Tyrosine-protein phosphatase domain. Catalysis depends on C1123, which acts as the Phosphocysteine intermediate. Substrate-binding positions include 1123–1129 (CSAGVGR) and Q1167.

The protein belongs to the protein-tyrosine phosphatase family. Non-receptor class subfamily. As to quaternary structure, interacts with FLT4; the interaction is enhanced by stimulation with VEGFC. Interacts (via PPxY motifs) with YAP1 (via WW domains); this interaction leads to the cytoplasmic sequestration of YAP1 and inhibits its transcriptional coactivator activity. In terms of processing, ubiquitinated by the ECS (Elongin BC-CUL2/5-SOCS-box protein)/LRR1 E3 ligase complex and subsequently targeted to proteasomal degradation. As to expression, thymus; in cells of both hematopoietic and non-hematopoietic origins.

It localises to the cytoplasm. It is found in the cytoskeleton. The protein localises to the nucleus. It carries out the reaction O-phospho-L-tyrosyl-[protein] + H2O = L-tyrosyl-[protein] + phosphate. Its function is as follows. Protein tyrosine phosphatase which may play a role in the regulation of lymphangiogenesis, cell-cell adhesion, cell-matrix adhesion, cell migration, cell growth and also regulates TGF-beta gene expression, thereby modulating epithelial-mesenchymal transition. Mediates beta-catenin dephosphorylation at adhesion junctions. Acts as a negative regulator of the oncogenic property of YAP, a downstream target of the hippo pathway, in a cell density-dependent manner. May function as a tumor suppressor. The sequence is that of Tyrosine-protein phosphatase non-receptor type 14 (Ptpn14) from Mus musculus (Mouse).